A 402-amino-acid chain; its full sequence is Tryptophan synthase beta chain (402 aa).

Residue Lys-88 is modified to N6-(pyridoxal phosphate)lysine.

Belongs to the TrpB family. As to quaternary structure, tetramer of two alpha and two beta chains. Requires pyridoxal 5'-phosphate as cofactor.

The enzyme catalyses (1S,2R)-1-C-(indol-3-yl)glycerol 3-phosphate + L-serine = D-glyceraldehyde 3-phosphate + L-tryptophan + H2O. The protein operates within amino-acid biosynthesis; L-tryptophan biosynthesis; L-tryptophan from chorismate: step 5/5. Functionally, the beta subunit is responsible for the synthesis of L-tryptophan from indole and L-serine. In Pasteurella multocida (strain Pm70), this protein is Tryptophan synthase beta chain (trpB).